A 357-amino-acid chain; its full sequence is Glutamyl endopeptidase (357 aa).

The N-terminal stretch at 1-29 is a signal peptide; it reads MKGKFLKVSSLFVATLTTATLVSSPAANA. A propeptide spanning residues 30–68 is cleaved from the precursor; that stretch reads LSSKAMDNHPQQTQTDKQQTPKIQKGGNLKPLEQRERAN. The disordered stretch occupies residues 33–58; it reads KAMDNHPQQTQTDKQQTPKIQKGGNL. Positions 40–54 are enriched in low complexity; it reads QQTQTDKQQTPKIQK. Residues histidine 119, aspartate 161, and serine 237 each act as charge relay system in the active site. The tract at residues 282–357 is disordered; the sequence is NFANDDHPNN…NNNSDNPDAA (76 aa). 18 repeat units span residues 289 to 291, 292 to 294, 295 to 297, 298 to 300, 301 to 303, 304 to 306, 307 to 309, 310 to 312, 313 to 315, 316 to 318, 319 to 321, 322 to 324, 325 to 327, 328 to 330, 331 to 333, 337 to 339, 340 to 342, and 343 to 345. Residues 289-345 are 18 X 3 AA repeats of P-[DN]-N; the sequence is PNNPDNPDNPNNPDNPNNPDNPNNPDNPDNPNNPDNPNNPDNPNNPDQPNNPNNPDN. Over residues 291 to 357 the composition is skewed to low complexity; sequence NPDNPDNPNN…NNNSDNPDAA (67 aa).

Belongs to the peptidase S1B family. Post-translationally, proteolytically cleaved by aureolysin (aur). This cleavage leads to the activation of SspA.

The protein localises to the secreted. The catalysed reaction is Preferential cleavage: Glu-|-Xaa, Asp-|-Xaa.. Preferentially cleaves peptide bonds on the carboxyl-terminal side of aspartate and glutamate. Along with other extracellular proteases it is involved in colonization and infection of human tissues. Required for proteolytic maturation of thiol protease SspB and inactivation of SspC, an inhibitor of SspB. It is the most important protease for degradation of fibronectin-binding protein (FnBP) and surface protein A, which are involved in adherence to host cells. May also protect bacteria against host defense mechanism by cleaving the immunoglobulin classes IgG, IgA and IgM. May be involved in the stability of secreted lipases. The protein is Glutamyl endopeptidase (sspA) of Staphylococcus aureus (strain MRSA252).